A 277-amino-acid polypeptide reads, in one-letter code: Small ribosomal subunit protein uS3 (277 aa).

The region spanning 43–111 (IRELMSKGMD…QIQLNILEVK (69 aa)) is the KH type-2 domain. A disordered region spans residues 217–277 (AAQQAAAPSS…AEANNAEGGK (61 aa)). The segment covering 245 to 258 (NDRNDRGGRRERDS) has biased composition (basic and acidic residues). Positions 259–277 (AAAPQQNSAAEANNAEGGK) are enriched in low complexity.

This sequence belongs to the universal ribosomal protein uS3 family. Part of the 30S ribosomal subunit. Forms a tight complex with proteins S10 and S14.

Functionally, binds the lower part of the 30S subunit head. Binds mRNA in the 70S ribosome, positioning it for translation. This chain is Small ribosomal subunit protein uS3, found in Kocuria rhizophila (strain ATCC 9341 / DSM 348 / NBRC 103217 / DC2201).